A 373-amino-acid chain; its full sequence is Chaperone protein DnaJ (373 aa).

Residues 5–70 (DFYATLGVAR…EKRAMYDQYG (66 aa)) form the J domain. The CR-type zinc-finger motif lies at 134-212 (GVKKRINIPT…CRGAGRNKAV (79 aa)). Zn(2+) contacts are provided by Cys147, Cys150, Cys164, Cys167, Cys186, Cys189, Cys200, and Cys203. CXXCXGXG motif repeat units lie at residues 147-154 (CDVCNGSG), 164-171 (CPTCKGSG), 186-193 (CPTCHGAG), and 200-207 (CVKCRGAG).

It belongs to the DnaJ family. In terms of assembly, homodimer. Requires Zn(2+) as cofactor.

The protein localises to the cytoplasm. Its function is as follows. Participates actively in the response to hyperosmotic and heat shock by preventing the aggregation of stress-denatured proteins and by disaggregating proteins, also in an autonomous, DnaK-independent fashion. Unfolded proteins bind initially to DnaJ; upon interaction with the DnaJ-bound protein, DnaK hydrolyzes its bound ATP, resulting in the formation of a stable complex. GrpE releases ADP from DnaK; ATP binding to DnaK triggers the release of the substrate protein, thus completing the reaction cycle. Several rounds of ATP-dependent interactions between DnaJ, DnaK and GrpE are required for fully efficient folding. Also involved, together with DnaK and GrpE, in the DNA replication of plasmids through activation of initiation proteins. The sequence is that of Chaperone protein DnaJ from Neisseria meningitidis serogroup C (strain 053442).